Reading from the N-terminus, the 244-residue chain is Reticulon-like protein B7 (244 aa).

A Reticulon domain is found at 70 to 244; sequence PADVLLWRDK…EAKFLSKIPH (175 aa). 3 helical membrane passes run 80–100, 103–123, and 172–192; these read KVTL…GFGG, LLTS…LWSN, and FVMA…FSFL.

Its subcellular location is the endoplasmic reticulum membrane. The chain is Reticulon-like protein B7 (RTNLB7) from Arabidopsis thaliana (Mouse-ear cress).